The primary structure comprises 810 residues: Venom phosphodiesterase 2 (810 aa).

Residues Met-1 to Gly-23 form the signal peptide. One can recognise an SMB domain in the interval Gln-33–Ser-77. Cystine bridges form between Cys-37-Cys-42, Cys-37-Cys-54, Cys-42-Cys-72, Cys-52-Cys-54, Cys-52-Cys-65, Cys-58-Cys-64, Cys-65-Cys-72, Cys-83-Cys-129, and Cys-91-Cys-303. Positions 106 and 144 each coordinate a divalent metal cation. Thr-144 serves as the catalytic AMP-threonine intermediate. Asn-175, Asn-218, and Asn-229 each carry an N-linked (GlcNAc...) asparagine glycan. An AMP-binding site is contributed by Lys-230. A divalent metal cation contacts are provided by Asp-264, His-268, Asp-311, and His-312. Residue His-268 participates in AMP binding. 6 cysteine pairs are disulfide-bonded: Cys-319–Cys-416, Cys-367–Cys-752, Cys-500–Cys-558, Cys-513–Cys-613, Cys-515–Cys-598, and Cys-721–Cys-731. An N-linked (GlcNAc...) asparagine glycan is attached at Asn-364. His-421 lines the a divalent metal cation pocket. Residues Asn-471, Asn-553, Asn-633, and Asn-704 are each glycosylated (N-linked (GlcNAc...) asparagine).

Belongs to the nucleotide pyrophosphatase/phosphodiesterase family. As to quaternary structure, monomer cleaved in two subunits; disulfide-linked. Is synthesized as a single-chain protein and is subsequently cleaved to form a two-subunit protein held together with disulfide bonds. The cofactor is a divalent metal cation. In terms of tissue distribution, expressed by venom gland.

It is found in the secreted. The catalysed reaction is ADP + H2O = AMP + phosphate + H(+). Hydrolyzes ADP with high activity. Shows weak or no activity on 5'-AMP, 5'-GMP, 3'-AMP, ATP, cAMP, and cGMP. Is devoid of monophosphatase and proteinase activities. Dose-dependently inhibits platelet aggregation induced by ADP (IC(50)=0.99 uM) and collagen (IC(50)=1.4 uM). In Crotalus adamanteus (Eastern diamondback rattlesnake), this protein is Venom phosphodiesterase 2.